The following is a 342-amino-acid chain: NAD kinase (342 aa).

Residue aspartate 66 is the Proton acceptor of the active site. Residues 66–67, arginine 71, 141–142, lysine 152, aspartate 171, 182–187, and alanine 206 contribute to the NAD(+) site; these read DG, ND, and TAYAFS.

Belongs to the NAD kinase family. The cofactor is a divalent metal cation.

It localises to the cytoplasm. It catalyses the reaction NAD(+) + ATP = ADP + NADP(+) + H(+). In terms of biological role, involved in the regulation of the intracellular balance of NAD and NADP, and is a key enzyme in the biosynthesis of NADP. Catalyzes specifically the phosphorylation on 2'-hydroxyl of the adenosine moiety of NAD to yield NADP. The sequence is that of NAD kinase from Bifidobacterium longum (strain NCC 2705).